We begin with the raw amino-acid sequence, 95 residues long: Co-chaperonin GroES (95 aa).

The protein belongs to the GroES chaperonin family. As to quaternary structure, heptamer of 7 subunits arranged in a ring. Interacts with the chaperonin GroEL.

Its subcellular location is the cytoplasm. Together with the chaperonin GroEL, plays an essential role in assisting protein folding. The GroEL-GroES system forms a nano-cage that allows encapsulation of the non-native substrate proteins and provides a physical environment optimized to promote and accelerate protein folding. GroES binds to the apical surface of the GroEL ring, thereby capping the opening of the GroEL channel. The sequence is that of Co-chaperonin GroES from Streptococcus mutans serotype c (strain ATCC 700610 / UA159).